The sequence spans 344 residues: L-rhamnose-proton symporter (344 aa).

Helical transmembrane passes span 4 to 24 (AITM…CFYA), 38 to 58 (WSVG…ALLL), 68 to 88 (FNLS…IGNI), 101 to 121 (MGIG…TPII), 137 to 157 (TLLG…AGQL), 175 to 195 (LLLA…MNAA), 214 to 234 (LPSY…FCFI), 259 to 279 (ILLS…YAWG), 290 to 310 (MSWM…GLVL), and 321 to 341 (VAVL…VGLG).

It belongs to the L-rhamnose transporter (TC 2.A.7.6) family.

It localises to the cell inner membrane. The catalysed reaction is L-rhamnopyranose(in) + H(+)(in) = L-rhamnopyranose(out) + H(+)(out). Functionally, uptake of L-rhamnose across the cytoplasmic membrane with the concomitant transport of protons into the cell (symport system). The protein is L-rhamnose-proton symporter of Salmonella gallinarum (strain 287/91 / NCTC 13346).